Here is a 294-residue protein sequence, read N- to C-terminus: 4-hydroxy-tetrahydrodipicolinate synthase (294 aa).

Thr47 lines the pyruvate pocket. Tyr135 serves as the catalytic Proton donor/acceptor. The active-site Schiff-base intermediate with substrate is the Lys163. Residue Thr205 coordinates pyruvate.

This sequence belongs to the DapA family. As to quaternary structure, homotetramer; dimer of dimers.

The protein localises to the cytoplasm. It carries out the reaction L-aspartate 4-semialdehyde + pyruvate = (2S,4S)-4-hydroxy-2,3,4,5-tetrahydrodipicolinate + H2O + H(+). It functions in the pathway amino-acid biosynthesis; L-lysine biosynthesis via DAP pathway; (S)-tetrahydrodipicolinate from L-aspartate: step 3/4. Catalyzes the condensation of (S)-aspartate-beta-semialdehyde [(S)-ASA] and pyruvate to 4-hydroxy-tetrahydrodipicolinate (HTPA). The protein is 4-hydroxy-tetrahydrodipicolinate synthase of Rickettsia felis (strain ATCC VR-1525 / URRWXCal2) (Rickettsia azadi).